The following is a 483-amino-acid chain: Altronate oxidoreductase (483 aa).

Position 18–29 (18–29) interacts with NAD(+); sequence IIQFGEGNFLRA.

The protein belongs to the mannitol dehydrogenase family. UxaB subfamily.

The catalysed reaction is D-altronate + NAD(+) = keto-D-tagaturonate + NADH + H(+). It participates in carbohydrate metabolism; pentose and glucuronate interconversion. The protein is Altronate oxidoreductase of Enterobacter sp. (strain 638).